A 227-amino-acid polypeptide reads, in one-letter code: Cytidylate kinase (227 aa).

12–20 (GPSGAGKGT) contacts ATP.

The protein belongs to the cytidylate kinase family. Type 1 subfamily.

The protein localises to the cytoplasm. The catalysed reaction is CMP + ATP = CDP + ADP. The enzyme catalyses dCMP + ATP = dCDP + ADP. The sequence is that of Cytidylate kinase from Salmonella paratyphi A (strain ATCC 9150 / SARB42).